Here is a 176-residue protein sequence, read N- to C-terminus: Large ribosomal subunit protein uL6 (176 aa).

It belongs to the universal ribosomal protein uL6 family. In terms of assembly, part of the 50S ribosomal subunit.

This protein binds to the 23S rRNA, and is important in its secondary structure. It is located near the subunit interface in the base of the L7/L12 stalk, and near the tRNA binding site of the peptidyltransferase center. This Lactobacillus acidophilus (strain ATCC 700396 / NCK56 / N2 / NCFM) protein is Large ribosomal subunit protein uL6.